We begin with the raw amino-acid sequence, 481 residues long: Phenylalanine--tRNA ligase alpha subunit (481 aa).

Residues T322, 361-363, and Y401 contribute to the L-phenylalanine site; that span reads QLE. Residue E403 participates in Mg(2+) binding. F426 provides a ligand contact to L-phenylalanine.

It belongs to the class-II aminoacyl-tRNA synthetase family. Phe-tRNA synthetase alpha subunit type 2 subfamily. In terms of assembly, tetramer of two alpha and two beta subunits. Mg(2+) serves as cofactor.

It is found in the cytoplasm. It carries out the reaction tRNA(Phe) + L-phenylalanine + ATP = L-phenylalanyl-tRNA(Phe) + AMP + diphosphate + H(+). In Methanoculleus marisnigri (strain ATCC 35101 / DSM 1498 / JR1), this protein is Phenylalanine--tRNA ligase alpha subunit.